A 333-amino-acid polypeptide reads, in one-letter code: Heat shock transcription factor, X-linked member 4 (333 aa).

The segment at 1–66 (MASQNTEQEY…QDNSPPEDRN (66 aa)) is disordered. The segment covering 29–39 (GSSPDPNPDSS) has biased composition (low complexity). Residues 49-60 (AMSQDPGSQDNS) are compositionally biased toward polar residues. Residues 79-182 (FRLSFPRKLW…PRLLENIQRK (104 aa)) mediate DNA binding. The segment at 227 to 275 (QGAPSVQGPSGTQSFRRSGMWSKKSATRHPLGNGPPQEPNGPSWEGTSG) is disordered. Over residues 228 to 242 (GAPSVQGPSGTQSFR) the composition is skewed to polar residues.

The protein belongs to the HSF family.

The protein resides in the nucleus. In Homo sapiens (Human), this protein is Heat shock transcription factor, X-linked member 4.